An 81-amino-acid polypeptide reads, in one-letter code: Small cysteine-rich protein 1 2 (81 aa).

Positions Met-1 to Ser-19 are cleaved as a signal peptide. The propeptide occupies Gln-20 to Tyr-39.

This sequence belongs to the Cnidaria small cysteine-rich protein (SCRiP) family. alpha subfamily. Post-translationally, the basic myotoxic domain of rattlesnake crotamine toxins (with 6 Cys residues) has been detected in this protein. However, this protein contains 2 additional Cys at the C-terminal region. Hence, this protein may contain 4 disulfide bonds instead of the 3 suggested by the myotoxin domain.

It localises to the secreted. Its subcellular location is the nematocyst. Functionally, induces neurotoxic symptoms on zebrafish. Has also been claimed to be implied in calcification, but tests on homolog proteins suggest that proteins of this family have a neurotoxic function and not a calcification function. The polypeptide is Small cysteine-rich protein 1 2 (Montipora capitata (Rice coral)).